The following is a 581-amino-acid chain: Penicillin-binding protein activator LpoA (581 aa).

The signal sequence occupies residues 1–26 (MLSILMQGLRLKKCFLPILVMFFLAG). Cysteine 27 carries the N-palmitoyl cysteine lipid modification. Cysteine 27 is lipidated: S-diacylglycerol cysteine.

This sequence belongs to the LpoA family. Interacts with PBP1a.

The protein localises to the cell outer membrane. Functionally, regulator of peptidoglycan synthesis that is essential for the function of penicillin-binding protein 1A (PBP1a). The sequence is that of Penicillin-binding protein activator LpoA from Histophilus somni (strain 129Pt) (Haemophilus somnus).